Here is a 154-residue protein sequence, read N- to C-terminus: uncharacterized protein (154 aa).

The protein resides in the mitochondrion. This is an uncharacterized protein from Marchantia polymorpha (Common liverwort).